The primary structure comprises 482 residues: Cysteine--tRNA ligase (482 aa).

Zn(2+) is bound at residue Cys29. A 'HIGH' region motif is present at residues 31–41 (PTVYDSAHVGH). Cys210, His235, and Glu239 together coordinate Zn(2+). Residues 272–276 (KMSKS) carry the 'KMSKS' region motif. Lys275 contributes to the ATP binding site.

Belongs to the class-I aminoacyl-tRNA synthetase family. Monomer. Zn(2+) is required as a cofactor.

The protein localises to the cytoplasm. The enzyme catalyses tRNA(Cys) + L-cysteine + ATP = L-cysteinyl-tRNA(Cys) + AMP + diphosphate. This is Cysteine--tRNA ligase from Anaeromyxobacter sp. (strain Fw109-5).